We begin with the raw amino-acid sequence, 292 residues long: Protease HtpX (292 aa).

Transmembrane regions (helical) follow at residues 5–25 (IFLFLLTNLAVLMLAGIVMSL) and 34–54 (SGLLVMAAIFGFGGSFISLLL). H140 serves as a coordination point for Zn(2+). Residue E141 is part of the active site. A Zn(2+)-binding site is contributed by H144. Helical transmembrane passes span 155 to 175 (LLQGVLNTFVIVLARVVGGII) and 193 to 213 (IIVFALEMVFGLFATMIAMWF). E218 contributes to the Zn(2+) binding site.

It belongs to the peptidase M48B family. Zn(2+) serves as cofactor.

The protein resides in the cell inner membrane. The protein is Protease HtpX of Xanthomonas axonopodis pv. citri (strain 306).